The following is a 195-amino-acid chain: MRQADVTRNTSETKIQISINLDGTGKAELASGVPFLDHMLDQIARHGMIDLKVVANGDAHIDDHHTVEDVGITLGQAFAKAVGDKVGITRYGHSYVPLDETLSRIVIDFSGRPGLEFNVPFTRARVGDFDVDLSIEFFRGFVNHAGVTLHIDNLRGINAHHQIETVFKAFGRALRMALAVDPRASGSIPSTKGSL.

The protein belongs to the imidazoleglycerol-phosphate dehydratase family.

It localises to the cytoplasm. It catalyses the reaction D-erythro-1-(imidazol-4-yl)glycerol 3-phosphate = 3-(imidazol-4-yl)-2-oxopropyl phosphate + H2O. Its pathway is amino-acid biosynthesis; L-histidine biosynthesis; L-histidine from 5-phospho-alpha-D-ribose 1-diphosphate: step 6/9. The polypeptide is Imidazoleglycerol-phosphate dehydratase (Polynucleobacter necessarius subsp. necessarius (strain STIR1)).